A 277-amino-acid chain; its full sequence is Phosphonates import ATP-binding protein PhnC (277 aa).

Residues 3–251 enclose the ABC transporter domain; it reads IKLDKVSARH…RLQALYAQHL (249 aa). Position 40–47 (40–47) interacts with ATP; sequence GPSGAGKT.

It belongs to the ABC transporter superfamily. Phosphonates importer (TC 3.A.1.9.1) family. The complex is composed of two ATP-binding proteins (PhnC), two transmembrane proteins (PhnE) and a solute-binding protein (PhnD).

Its subcellular location is the cell inner membrane. The enzyme catalyses phosphonate(out) + ATP + H2O = phosphonate(in) + ADP + phosphate + H(+). Functionally, part of the ABC transporter complex PhnCDE involved in phosphonates import. Responsible for energy coupling to the transport system. The sequence is that of Phosphonates import ATP-binding protein PhnC from Polaromonas sp. (strain JS666 / ATCC BAA-500).